Here is a 341-residue protein sequence, read N- to C-terminus: GTPase Obg (341 aa).

An Obg domain is found at 1–159 (MKFVDEALIK…RNLRLELRVL (159 aa)). The tract at residues 128 to 150 (TRYKSSVNRSPRQTTPGSPGESR) is disordered. Over residues 129–144 (RYKSSVNRSPRQTTPG) the composition is skewed to polar residues. The region spanning 160–334 (ADVGLLGLPN…LCYALMQLID (175 aa)) is the OBG-type G domain. GTP contacts are provided by residues 166–173 (GLPNAGKS), 191–195 (FTTLH), 213–216 (DIPG), 283–286 (NKID), and 315–317 (SAI). Mg(2+) is bound by residues Ser-173 and Thr-193.

It belongs to the TRAFAC class OBG-HflX-like GTPase superfamily. OBG GTPase family. As to quaternary structure, monomer. The cofactor is Mg(2+).

Its subcellular location is the cytoplasm. An essential GTPase which binds GTP, GDP and possibly (p)ppGpp with moderate affinity, with high nucleotide exchange rates and a fairly low GTP hydrolysis rate. Plays a role in control of the cell cycle, stress response, ribosome biogenesis and in those bacteria that undergo differentiation, in morphogenesis control. The polypeptide is GTPase Obg (Legionella pneumophila subsp. pneumophila (strain Philadelphia 1 / ATCC 33152 / DSM 7513)).